An 844-amino-acid chain; its full sequence is DNA mismatch repair protein MutS (844 aa).

610 to 617 serves as a coordination point for ATP; the sequence is GPNMGGKS.

This sequence belongs to the DNA mismatch repair MutS family.

Functionally, this protein is involved in the repair of mismatches in DNA. It is possible that it carries out the mismatch recognition step. This protein has a weak ATPase activity. The polypeptide is DNA mismatch repair protein MutS (Francisella tularensis subsp. novicida (strain U112)).